The primary structure comprises 467 residues: Light-independent protochlorophyllide reductase subunit N (467 aa).

[4Fe-4S] cluster is bound by residues cysteine 22, cysteine 47, and cysteine 107.

Belongs to the BchN/ChlN family. As to quaternary structure, protochlorophyllide reductase is composed of three subunits; ChlL, ChlN and ChlB. Forms a heterotetramer of two ChlB and two ChlN subunits. The cofactor is [4Fe-4S] cluster.

It localises to the plastid. Its subcellular location is the chloroplast. The catalysed reaction is chlorophyllide a + oxidized 2[4Fe-4S]-[ferredoxin] + 2 ADP + 2 phosphate = protochlorophyllide a + reduced 2[4Fe-4S]-[ferredoxin] + 2 ATP + 2 H2O. The protein operates within porphyrin-containing compound metabolism; chlorophyll biosynthesis (light-independent). Component of the dark-operative protochlorophyllide reductase (DPOR) that uses Mg-ATP and reduced ferredoxin to reduce ring D of protochlorophyllide (Pchlide) to form chlorophyllide a (Chlide). This reaction is light-independent. The NB-protein (ChlN-ChlB) is the catalytic component of the complex. In Chara vulgaris (Common stonewort), this protein is Light-independent protochlorophyllide reductase subunit N.